Consider the following 302-residue polypeptide: Sulfate adenylyltransferase subunit 2 (302 aa).

Belongs to the PAPS reductase family. CysD subfamily. As to quaternary structure, heterodimer composed of CysD, the smaller subunit, and CysN.

It carries out the reaction sulfate + ATP + H(+) = adenosine 5'-phosphosulfate + diphosphate. It participates in sulfur metabolism; hydrogen sulfide biosynthesis; sulfite from sulfate: step 1/3. In terms of biological role, with CysN forms the ATP sulfurylase (ATPS) that catalyzes the adenylation of sulfate producing adenosine 5'-phosphosulfate (APS) and diphosphate, the first enzymatic step in sulfur assimilation pathway. APS synthesis involves the formation of a high-energy phosphoric-sulfuric acid anhydride bond driven by GTP hydrolysis by CysN coupled to ATP hydrolysis by CysD. The chain is Sulfate adenylyltransferase subunit 2 from Xanthomonas axonopodis pv. citri (strain 306).